The sequence spans 266 residues: 4-hydroxy-tetrahydrodipicolinate reductase (266 aa).

Residue 10 to 15 (GPRGRM) coordinates NAD(+). Position 38 (lysine 38) interacts with NADP(+). Residues 99–101 (GTT) and 125–128 (APNF) each bind NAD(+). The active-site Proton donor/acceptor is histidine 155. A (S)-2,3,4,5-tetrahydrodipicolinate-binding site is contributed by histidine 156. Lysine 159 serves as the catalytic Proton donor. 165–166 (GT) is a (S)-2,3,4,5-tetrahydrodipicolinate binding site.

It belongs to the DapB family.

It is found in the cytoplasm. The enzyme catalyses (S)-2,3,4,5-tetrahydrodipicolinate + NAD(+) + H2O = (2S,4S)-4-hydroxy-2,3,4,5-tetrahydrodipicolinate + NADH + H(+). It carries out the reaction (S)-2,3,4,5-tetrahydrodipicolinate + NADP(+) + H2O = (2S,4S)-4-hydroxy-2,3,4,5-tetrahydrodipicolinate + NADPH + H(+). It participates in amino-acid biosynthesis; L-lysine biosynthesis via DAP pathway; (S)-tetrahydrodipicolinate from L-aspartate: step 4/4. Its function is as follows. Catalyzes the conversion of 4-hydroxy-tetrahydrodipicolinate (HTPA) to tetrahydrodipicolinate. The chain is 4-hydroxy-tetrahydrodipicolinate reductase from Bacillus cereus (strain B4264).